Reading from the N-terminus, the 312-residue chain is Homoserine kinase (312 aa).

An ATP-binding site is contributed by 91 to 101 (PVASGLGSSAC).

This sequence belongs to the GHMP kinase family. Homoserine kinase subfamily.

It localises to the cytoplasm. It catalyses the reaction L-homoserine + ATP = O-phospho-L-homoserine + ADP + H(+). It functions in the pathway amino-acid biosynthesis; L-threonine biosynthesis; L-threonine from L-aspartate: step 4/5. In terms of biological role, catalyzes the ATP-dependent phosphorylation of L-homoserine to L-homoserine phosphate. This chain is Homoserine kinase, found in Blochmanniella pennsylvanica (strain BPEN).